The following is a 122-amino-acid chain: Large ribosomal subunit protein bL17 (122 aa).

Belongs to the bacterial ribosomal protein bL17 family. Part of the 50S ribosomal subunit. Contacts protein L32.

This Neisseria meningitidis serogroup B (strain ATCC BAA-335 / MC58) protein is Large ribosomal subunit protein bL17.